Here is a 329-residue protein sequence, read N- to C-terminus: Transmembrane protein I329L (329 aa).

A signal peptide spans 1–31 (MLRVFIFFVFLGSGLAGKVKSPITCKYFISK). N-linked (GlcNAc...) asparagine; by host glycans are attached at residues Asn-32, Asn-39, Asn-44, Asn-58, Asn-76, Asn-82, Asn-101, Asn-185, and Asn-219. At 32-239 (NNTWYKYNVT…NTERYKNCYP (208 aa)) the chain is on the extracellular side. A helical membrane pass occupies residues 240–260 (FVLVSIICSCISSLFLLICLL). The Cytoplasmic segment spans residues 261–329 (RTICKKYSCT…EKKVSCSRRK (69 aa)).

This sequence belongs to the asfivirus I329L family. Highly glycosylated.

It is found in the host endoplasmic reticulum membrane. Its subcellular location is the host Golgi apparatus membrane. Viral TLR3 homolog that probably prevents TLR3 dimerization and subsequent induction of IFN. Inhibits dsRNA-stimulated activation of NF-kB and IRF3. The protein is Transmembrane protein I329L of Ornithodoros (relapsing fever ticks).